The following is a 485-amino-acid chain: Ribulose bisphosphate carboxylase large chain 2 (485 aa).

Substrate-binding residues include Asn-124 and Thr-174. Lys-176 (proton acceptor) is an active-site residue. Substrate is bound at residue Lys-178. Residues Lys-202, Asp-204, and Glu-205 each coordinate Mg(2+). Lys-202 carries the post-translational modification N6-carboxylysine. The active-site Proton acceptor is the His-294. Substrate-binding residues include Arg-295, His-327, and Ser-379.

The protein belongs to the RuBisCO large chain family. Type I subfamily. In terms of assembly, heterohexadecamer of 8 large chains and 8 small chains. Mg(2+) is required as a cofactor.

The enzyme catalyses 2 (2R)-3-phosphoglycerate + 2 H(+) = D-ribulose 1,5-bisphosphate + CO2 + H2O. The catalysed reaction is D-ribulose 1,5-bisphosphate + O2 = 2-phosphoglycolate + (2R)-3-phosphoglycerate + 2 H(+). In terms of biological role, ruBisCO catalyzes two reactions: the carboxylation of D-ribulose 1,5-bisphosphate, the primary event in carbon dioxide fixation, as well as the oxidative fragmentation of the pentose substrate. Both reactions occur simultaneously and in competition at the same active site. The chain is Ribulose bisphosphate carboxylase large chain 2 from Rhodopseudomonas palustris (strain BisB5).